A 390-amino-acid chain; its full sequence is Ankyrin repeat domain-containing protein 63 (390 aa).

ANK repeat units follow at residues 11–40 (AGTR…RSII), 46–79 (QGRT…AVNL), 83–112 (RGRT…DPEA), 116–145 (AGNS…RLGL), and 153–182 (AGLT…RAAA). Disordered stretches follow at residues 181–213 (AAAA…SPRR) and 226–245 (AGGH…ELAS). Residue Ser193 is modified to Phosphoserine. Ser304 carries the phosphoserine modification. Residues 320–377 (VGLSPHPEGCPGSGRLGLRRRSTAPDIPSLVGEASGPESGPELENNALPFSVPGPKPW) form a disordered region.

The sequence is that of Ankyrin repeat domain-containing protein 63 from Mus musculus (Mouse).